A 174-amino-acid chain; its full sequence is Small hydrophobic protein (174 aa).

A helical membrane pass occupies residues 33–53 (VAVICAILALIFLVATIGLSV). N-linked (GlcNAc...) asparagine; by host glycosylation occurs at Asn165.

Its subcellular location is the membrane. The chain is Small hydrophobic protein (SH) from Meleagris gallopavo (Wild turkey).